A 292-amino-acid chain; its full sequence is Phosphatidylglycerol--prolipoprotein diacylglyceryl transferase (292 aa).

A run of 7 helical transmembrane segments spans residues 25-45 (ITLH…WWYA), 70-90 (FVVW…VLVW), 102-122 (IIAV…IIIA), 138-158 (FDII…CNFI), 193-213 (FMEG…FKAF), 217-237 (GTVS…SEVY), and 255-275 (GFTY…YLLL). An a 1,2-diacyl-sn-glycero-3-phospho-(1'-sn-glycerol)-binding site is contributed by arginine 153.

This sequence belongs to the Lgt family.

It is found in the cell inner membrane. It carries out the reaction L-cysteinyl-[prolipoprotein] + a 1,2-diacyl-sn-glycero-3-phospho-(1'-sn-glycerol) = an S-1,2-diacyl-sn-glyceryl-L-cysteinyl-[prolipoprotein] + sn-glycerol 1-phosphate + H(+). It functions in the pathway protein modification; lipoprotein biosynthesis (diacylglyceryl transfer). Its function is as follows. Catalyzes the transfer of the diacylglyceryl group from phosphatidylglycerol to the sulfhydryl group of the N-terminal cysteine of a prolipoprotein, the first step in the formation of mature lipoproteins. The protein is Phosphatidylglycerol--prolipoprotein diacylglyceryl transferase of Bartonella tribocorum (strain CIP 105476 / IBS 506).